The sequence spans 163 residues: Phosphopantetheine adenylyltransferase (163 aa).

Substrate is bound at residue threonine 10. Residues 10–11 and histidine 18 contribute to the ATP site; that span reads TF. Lysine 42, leucine 74, and arginine 88 together coordinate substrate. ATP is bound by residues 89–91, glutamate 99, and 124–130; these read GLR and NSFISST.

This sequence belongs to the bacterial CoaD family. As to quaternary structure, homohexamer. Requires Mg(2+) as cofactor.

The protein resides in the cytoplasm. The catalysed reaction is (R)-4'-phosphopantetheine + ATP + H(+) = 3'-dephospho-CoA + diphosphate. The protein operates within cofactor biosynthesis; coenzyme A biosynthesis; CoA from (R)-pantothenate: step 4/5. Functionally, reversibly transfers an adenylyl group from ATP to 4'-phosphopantetheine, yielding dephospho-CoA (dPCoA) and pyrophosphate. The polypeptide is Phosphopantetheine adenylyltransferase (Shewanella oneidensis (strain ATCC 700550 / JCM 31522 / CIP 106686 / LMG 19005 / NCIMB 14063 / MR-1)).